Reading from the N-terminus, the 290-residue chain is Bifunctional protein FolD (290 aa).

NADP(+)-binding positions include 169 to 171, isoleucine 194, and isoleucine 235; that span reads GAS.

Belongs to the tetrahydrofolate dehydrogenase/cyclohydrolase family. As to quaternary structure, homodimer.

It carries out the reaction (6R)-5,10-methylene-5,6,7,8-tetrahydrofolate + NADP(+) = (6R)-5,10-methenyltetrahydrofolate + NADPH. It catalyses the reaction (6R)-5,10-methenyltetrahydrofolate + H2O = (6R)-10-formyltetrahydrofolate + H(+). The protein operates within one-carbon metabolism; tetrahydrofolate interconversion. Functionally, catalyzes the oxidation of 5,10-methylenetetrahydrofolate to 5,10-methenyltetrahydrofolate and then the hydrolysis of 5,10-methenyltetrahydrofolate to 10-formyltetrahydrofolate. This chain is Bifunctional protein FolD, found in Helicobacter pylori (strain HPAG1).